We begin with the raw amino-acid sequence, 485 residues long: Zinc finger protein 639 (485 aa).

Over residues 1 to 14 (MSEYPKKRKRKTLH) the composition is skewed to basic residues. 2 disordered regions span residues 1–23 (MSEYPKKRKRKTLHPSRYSDSSG) and 54–82 (DNKDDDSDPETANDLPKFTDGTKARSRSQ). At serine 60 the chain carries Phosphoserine. Lysine 76 is covalently cross-linked (Glycyl lysine isopeptide (Lys-Gly) (interchain with G-Cter in SUMO2)). Serine 88 carries the phosphoserine modification. Residues lysine 177, lysine 181, and lysine 226 each participate in a glycyl lysine isopeptide (Lys-Gly) (interchain with G-Cter in SUMO2) cross-link. 8 C2H2-type zinc fingers span residues 204–227 (YKCELCEFNSKYFSDLKQHVILKH), 233–255 (NVCRVCKESFSTNMLLIEHAKLH), 260–283 (YICKYCDYKTVIFENLSQHIADTH), 289–311 (YWCEQCDVQFSSSSELYLHFQEH), 374–397 (FVCQVCGFRSRLHTNVNRHVAIEH), 403–425 (HVCDDCGKGFSSMLEYCKHLNSH), 431–454 (YLCQYCEYSTGQIEDLKIHLDFKH), and 460–482 (HKCSDCLMRFGNERELISHLPVH). Positions 371-455 (KNFFVCQVCG…LKIHLDFKHS (85 aa)) are interaction with CTNNA2.

Belongs to the krueppel C2H2-type zinc-finger protein family. Interacts with CTNNA2.

Its subcellular location is the nucleus. Binds DNA and may function as a transcriptional repressor. This Rattus norvegicus (Rat) protein is Zinc finger protein 639 (Znf639).